The sequence spans 923 residues: Neuropilin-1a (923 aa).

Residues 1–19 form the signal peptide; sequence MHCGLVLILFTGIFLIVSA. Residues 20–856 lie on the Extracellular side of the membrane; it reads LKNDKCGDNI…AGNMLKTLDP (837 aa). 3 cysteine pairs are disulfide-bonded: Cys25-Cys52, Cys80-Cys102, and Cys145-Cys171. 2 CUB domains span residues 25-139 and 145-263; these read CGDN…YEIF and CSRN…FTVL. Asn148 is a glycosylation site (N-linked (GlcNAc...) asparagine). Ca(2+) contacts are provided by Glu193, Asp207, and Asp248. Cys204 and Cys226 are joined by a disulfide. A glycan (N-linked (GlcNAc...) asparagine) is linked at Asn259. 2 cysteine pairs are disulfide-bonded: Cys273/Cys422 and Cys429/Cys581. F5/8 type C domains lie at 273–422 and 429–581; these read CTEP…VYGC and CSGM…LLGC. A glycan (N-linked (GlcNAc...) asparagine) is linked at Asn520. The tract at residues 587 to 624 is disordered; it reads TVPPTTPAASTTPSDECDDDQANCHSGTGDGYDQTGGT. An O-linked (Xyl...) (chondroitin sulfate) serine; alternate glycan is attached at Ser612. O-linked (Xyl...) (heparan sulfate) serine; alternate glycosylation is present at Ser612. An MAM domain is found at 642–811; the sequence is FACDFGWAND…DNVNMADCKD (170 aa). A helical transmembrane segment spans residues 857–877; sequence ILITIIAMSALGVFLGAICGV. The Cytoplasmic segment spans residues 878 to 923; the sequence is VLYCACSHSGMSDRNLSALENYNFELVDGVKLKKDKLNSQNSYSEA.

The protein belongs to the neuropilin family.

It is found in the membrane. Receptor involved in the development of the cardiovascular system, in angiogenesis, in the formation of certain neuronal circuits and in organogenesis outside the nervous system. It mediates the chemorepulsant activity of semaphorins. Regulates angiogenesis through a VEGF-dependent pathway. The chain is Neuropilin-1a (nrp1a) from Danio rerio (Zebrafish).